The chain runs to 211 residues: MYQPEFPPVPFRLGLYPVVDSVQWIERLLDAGVRTLQLRIKDQRDEEVEADVVAAIALGRRYNARLFINDYWRLAIKHQAYGVHLGQEDLQATDLSTIRAAGLRLGVSTHDDMEIDVALAARPSYIALGHVFPTQTKQMPSAPQGLEQLARHVERLADYPTVAIGGISLARAPAVIATGVGSIAVVSAITQAADWRLATAQLLEIAGVGDE.

4-amino-2-methyl-5-(diphosphooxymethyl)pyrimidine-binding positions include 37 to 41 (QLRIK) and asparagine 69. Mg(2+) is bound by residues aspartate 70 and aspartate 89. Position 108 (serine 108) interacts with 4-amino-2-methyl-5-(diphosphooxymethyl)pyrimidine. Residue 134 to 136 (TQT) participates in 2-[(2R,5Z)-2-carboxy-4-methylthiazol-5(2H)-ylidene]ethyl phosphate binding. Residue lysine 137 participates in 4-amino-2-methyl-5-(diphosphooxymethyl)pyrimidine binding. 2-[(2R,5Z)-2-carboxy-4-methylthiazol-5(2H)-ylidene]ethyl phosphate is bound by residues glycine 166 and 186-187 (VS).

The protein belongs to the thiamine-phosphate synthase family. It depends on Mg(2+) as a cofactor.

The catalysed reaction is 2-[(2R,5Z)-2-carboxy-4-methylthiazol-5(2H)-ylidene]ethyl phosphate + 4-amino-2-methyl-5-(diphosphooxymethyl)pyrimidine + 2 H(+) = thiamine phosphate + CO2 + diphosphate. It carries out the reaction 2-(2-carboxy-4-methylthiazol-5-yl)ethyl phosphate + 4-amino-2-methyl-5-(diphosphooxymethyl)pyrimidine + 2 H(+) = thiamine phosphate + CO2 + diphosphate. The enzyme catalyses 4-methyl-5-(2-phosphooxyethyl)-thiazole + 4-amino-2-methyl-5-(diphosphooxymethyl)pyrimidine + H(+) = thiamine phosphate + diphosphate. The protein operates within cofactor biosynthesis; thiamine diphosphate biosynthesis; thiamine phosphate from 4-amino-2-methyl-5-diphosphomethylpyrimidine and 4-methyl-5-(2-phosphoethyl)-thiazole: step 1/1. Its function is as follows. Condenses 4-methyl-5-(beta-hydroxyethyl)thiazole monophosphate (THZ-P) and 2-methyl-4-amino-5-hydroxymethyl pyrimidine pyrophosphate (HMP-PP) to form thiamine monophosphate (TMP). In Escherichia coli O6:H1 (strain CFT073 / ATCC 700928 / UPEC), this protein is Thiamine-phosphate synthase.